Here is a 469-residue protein sequence, read N- to C-terminus: 3-isopropylmalate dehydratase large subunit (469 aa).

Positions 347, 408, and 411 each coordinate [4Fe-4S] cluster.

The protein belongs to the aconitase/IPM isomerase family. LeuC type 1 subfamily. As to quaternary structure, heterodimer of LeuC and LeuD. The cofactor is [4Fe-4S] cluster.

The enzyme catalyses (2R,3S)-3-isopropylmalate = (2S)-2-isopropylmalate. Its pathway is amino-acid biosynthesis; L-leucine biosynthesis; L-leucine from 3-methyl-2-oxobutanoate: step 2/4. Functionally, catalyzes the isomerization between 2-isopropylmalate and 3-isopropylmalate, via the formation of 2-isopropylmaleate. This Actinobacillus pleuropneumoniae serotype 5b (strain L20) protein is 3-isopropylmalate dehydratase large subunit.